A 540-amino-acid polypeptide reads, in one-letter code: Phosphomethylpyrimidine synthase (540 aa).

Residues N143, M172, Y201, H237, 257 to 259 (SRG), 298 to 301 (DGLR), and E337 contribute to the substrate site. H341 lines the Zn(2+) pocket. Y364 is a substrate binding site. H405 serves as a coordination point for Zn(2+). Residues C485, C488, and C493 each contribute to the [4Fe-4S] cluster site.

Belongs to the ThiC family. The cofactor is [4Fe-4S] cluster.

The enzyme catalyses 5-amino-1-(5-phospho-beta-D-ribosyl)imidazole + S-adenosyl-L-methionine = 4-amino-2-methyl-5-(phosphooxymethyl)pyrimidine + CO + 5'-deoxyadenosine + formate + L-methionine + 3 H(+). It functions in the pathway cofactor biosynthesis; thiamine diphosphate biosynthesis. Functionally, catalyzes the synthesis of the hydroxymethylpyrimidine phosphate (HMP-P) moiety of thiamine from aminoimidazole ribotide (AIR) in a radical S-adenosyl-L-methionine (SAM)-dependent reaction. This chain is Phosphomethylpyrimidine synthase, found in Mycobacterium avium (strain 104).